Consider the following 295-residue polypeptide: Probable alpha-L-glutamate ligase 1 (295 aa).

Positions 104–287 constitute an ATP-grasp domain; that stretch reads MQLLSRKGIG…VANAIIEFIE (184 aa). ATP-binding positions include K141, 178 to 179, D187, and 211 to 213; these read EY and RSN. Mg(2+)-binding residues include D248, E260, and N262. Mn(2+) is bound by residues D248, E260, and N262.

The protein belongs to the RimK family. Requires Mg(2+) as cofactor. Mn(2+) serves as cofactor.

The chain is Probable alpha-L-glutamate ligase 1 from Shewanella denitrificans (strain OS217 / ATCC BAA-1090 / DSM 15013).